The following is a 425-amino-acid chain: Fe(2+) transport protein 3, chloroplastic (425 aa).

The helical transmembrane segment at Phe-65–Gly-85 threads the bilayer. Over Arg-86–Leu-97 the chain is Cytoplasmic. The helical transmembrane segment at Phe-98–Leu-118 threads the bilayer. The Lumenal segment spans residues Ala-119–Lys-137. The helical transmembrane segment at Phe-138–Met-158 threads the bilayer. At Gly-159 to His-269 the chain is on the cytoplasmic side. The chain crosses the membrane as a helical span at residues Ile-270–Ser-290. Over Leu-291–Arg-301 the chain is Lumenal. The chain crosses the membrane as a helical span at residues Pro-302–Ile-322. The Cytoplasmic segment spans residues Ser-323–Thr-333. Residues Ile-334–Ala-354 form a helical membrane-spanning segment. Residues Ser-355–Gly-369 are Lumenal-facing. The helical transmembrane segment at Ile-370–Ala-390 threads the bilayer. The Cytoplasmic portion of the chain corresponds to Asp-391 to Gln-404. A helical membrane pass occupies residues Ile-405–Ala-425.

The protein belongs to the ZIP transporter (TC 2.A.5) family.

The protein localises to the plastid. It localises to the chloroplast thylakoid membrane. In terms of biological role, may play a role in the transport of iron in the plastids. This Arabidopsis thaliana (Mouse-ear cress) protein is Fe(2+) transport protein 3, chloroplastic (IRT3).